The sequence spans 70 residues: uncharacterized protein (70 aa).

Residues 40 to 70 (LHQQRTAHKVTSPPSQRPQNSETKSDSQNRS) are disordered. Over residues 51-61 (SPPSQRPQNSE) the composition is skewed to polar residues.

This is an uncharacterized protein from Bdellovibrio phage phiMH2K (Bacteriophage phiMH2K).